The following is a 405-amino-acid chain: Beta-citrylglutamate synthase B (405 aa).

In terms of domain architecture, ATP-grasp spans 115-300 (FQELAGHGVP…VAGIVADFVL (186 aa)). Residues lysine 154, 189 to 199 (QEYVKESHGRD), and arginine 215 contribute to the ATP site. Aspartate 260, glutamate 273, and asparagine 275 together coordinate Mg(2+). Mn(2+) contacts are provided by aspartate 260, glutamate 273, and asparagine 275. Residues 359 to 387 (AMSTMSTSSTSSESEADLTETGPTPVGAN) are disordered. A compositionally biased stretch (low complexity) spans 360–371 (MSTMSTSSTSSE).

It belongs to the RimK family. It depends on Mg(2+) as a cofactor. Requires Mn(2+) as cofactor.

The protein localises to the cytoplasm. The catalysed reaction is citrate + L-glutamate + ATP = beta-citrylglutamate + ADP + phosphate + H(+). It carries out the reaction N-acetyl-L-aspartate + L-glutamate + ATP = N-acetyl-L-aspartyl-L-glutamate + ADP + phosphate + H(+). Functionally, catalyzes the synthesis of beta-citryl-L-glutamate and N-acetyl-L-aspartyl-L-glutamate. Beta-citryl-L-glutamate is synthesized more efficiently than N-acetyl-L-aspartyl-L-glutamate. This chain is Beta-citrylglutamate synthase B (rimklb), found in Danio rerio (Zebrafish).